Reading from the N-terminus, the 20-residue chain is Insulin-like growth factor-binding protein 2 (20 aa).

An IGFBP N-terminal domain is found at 2–20 (LVFYCPKCTAERQTACPKL).

Binds IGF2 more than IGF1. In terms of processing, N-glycosylated.

It is found in the secreted. Functionally, inhibits IGF-mediated growth and developmental rates. IGF-binding proteins prolong the half-life of the IGFs and have been shown to either inhibit or stimulate the growth promoting effects of the IGFs on cell culture. They alter the interaction of IGFs with their cell surface receptors. The chain is Insulin-like growth factor-binding protein 2 (igfbp2) from Oncorhynchus tshawytscha (Chinook salmon).